The following is a 253-amino-acid chain: Tyrosine recombinase XerD-like (253 aa).

The Core-binding (CB) domain occupies 8 to 81 (KQLTTQITNF…AVNQFLLYLY (74 aa)). The region spanning 93 to 253 (SETAPLPSQQ…PVTLEKYYKT (161 aa)) is the Tyr recombinase domain. Catalysis depends on residues Lys157 and Arg218. Tyr250 acts as the O-(3'-phospho-DNA)-tyrosine intermediate in catalysis.

Belongs to the 'phage' integrase family. XerD-like subfamily.

The protein localises to the cytoplasm. In terms of biological role, putative tyrosine recombinase. Not involved in the cutting and rejoining of the recombining DNA molecules on dif(SL) site. This is Tyrosine recombinase XerD-like from Streptococcus thermophilus (strain CNRZ 1066).